The following is a 489-amino-acid chain: Putative general secretion pathway protein A (489 aa).

26 to 33 serves as a coordination point for ATP; that stretch reads GEAGSGKT. Residues 237 to 257 form a helical membrane-spanning segment; that stretch reads MQLAVVMSGTIIALTCGWLLL.

It belongs to the ExeA family.

The protein localises to the cell membrane. Functionally, may play a regulatory role under conditions of derepressed gsp gene expression. In Escherichia coli (strain K12), this protein is Putative general secretion pathway protein A (gspA).